The primary structure comprises 470 residues: Glutamate--tRNA ligase (470 aa).

The 'HIGH' region motif lies at 9 to 19 (PSPTGFLHVGG). The 'KMSKS' region signature appears at 236 to 240 (RLSKR). Lys-239 lines the ATP pocket.

It belongs to the class-I aminoacyl-tRNA synthetase family. Glutamate--tRNA ligase type 1 subfamily. As to quaternary structure, monomer.

The protein resides in the cytoplasm. It catalyses the reaction tRNA(Glu) + L-glutamate + ATP = L-glutamyl-tRNA(Glu) + AMP + diphosphate. Catalyzes the attachment of glutamate to tRNA(Glu) in a two-step reaction: glutamate is first activated by ATP to form Glu-AMP and then transferred to the acceptor end of tRNA(Glu). This is Glutamate--tRNA ligase from Legionella pneumophila subsp. pneumophila (strain Philadelphia 1 / ATCC 33152 / DSM 7513).